The following is a 768-amino-acid chain: MTKFLGIFIVLGIGIGIGISTKQQWITVFYGVPVWKNSSVQAFCMTPTTRLWATTNCIPDDHDYTEVPLNITEPFEAWADRNPLVAQAGSNIHLLFEQTLKPCVKLSPLCIKMNCVELKGSATSTPATSTTAGTKLPCVRNKTDSNLQSCNDTIIEKEMNDEAASNCTFAMAGYIRDQKKNYSVVWNDAEIFCKRSTSHNGTKECYMIHCNDSVIKEACDKTYWDELRLRYCAPAGYALLKCNDWDYAGFKPECSNVSVVHCTTLMNTTVTTGLLLNGSYSENRTQIWQKHGVSNDSVLILLNKHYNLTVTCKRPGNKTVLPVTIMAGLVFHSQKYNTRLRQAWCHFQGNWKGAWKEVQEEIVKLPKERYQGTNDTNKIFLQRQFGDPEAANLWFNCQGEFFYCKMDWFLNYLNNLTVDADHNHCKNNAGKGRSPGPCVQRTYVACHIRSVINDWYTISKKTYAPPREGHLQCTSTVTGMTVELNYNNQNRTNVTLSPQIETIWAAELGRYKLVEITPIGFAPTEVRRYTGGQERQKRVPFVLGFLGFLGAAGTAMGAAATALTVQSQHLLAGILQQQKNLLAAVGAQQQMLKLTIWGVKNLNARVTALEKYLADQARLNAWGCAWKQVCHTTVPWTWNNTPEWNNMTWLEWEKQIEGLEGNITKQLEQAREQEEKNLDAYQKLSDWSSFWSWFDFSKWLNILKIGFLAVIGVIGLRLLYTLYTCIARVRQGYSPLSPQIHIHPWKGQPDNAGEPEEGGRTGKSKSTH.

An N-terminal signal peptide occupies residues 1–16 (MTKFLGIFIVLGIGIG). The Extracellular segment spans residues 17–701 (IGISTKQQWI…SWFDFSKWLN (685 aa)). The N-linked (GlcNAc...) asparagine; by host glycan is linked to Asn-37. Cysteines 44 and 57 form a disulfide. N-linked (GlcNAc...) asparagine; by host glycans are attached at residues Asn-70, Asn-141, Asn-151, Asn-166, Asn-181, Asn-200, and Asn-211. 5 cysteine pairs are disulfide-bonded: Cys-103–Cys-219, Cys-110–Cys-210, Cys-115–Cys-167, Cys-232–Cys-262, and Cys-242–Cys-254. A V1 region spans residues 115 to 166 (CVELKGSATSTPATSTTAGTKLPCVRNKTDSNLQSCNDTIIEKEMNDEAASN). Residues 167-210 (CTFAMAGYIRDQKKNYSVVWNDAEIFCKRSTSHNGTKECYMIHC) form a V2 region. N-linked (GlcNAc...) asparagine; by host glycosylation is found at Asn-256, Asn-267, Asn-277, Asn-283, Asn-295, Asn-307, Asn-317, Asn-374, Asn-415, Asn-490, and Asn-493. Positions 312–344 (CKRPGNKTVLPVTIMAGLVFHSQKYNTRLRQAW) are V3. A disulfide bridge links Cys-312 with Cys-345. Intrachain disulfides connect Cys-397/Cys-473 and Cys-404/Cys-446. Residues 404-446 (CKMDWFLNYLNNLTVDADHNHCKNNAGKGRSPGPCVQRTYVAC) are V4. The tract at residues 489–496 (QNRTNVTL) is V5. The tract at residues 539 to 559 (VPFVLGFLGFLGAAGTAMGAA) is fusion peptide. The immunosuppression stretch occupies residues 602 to 618 (LNARVTALEKYLADQAR). Residues Asn-646 and Asn-662 are each glycosylated (N-linked (GlcNAc...) asparagine; by host). A coiled-coil region spans residues 650-687 (LEWEKQIEGLEGNITKQLEQAREQEEKNLDAYQKLSDW). The tract at residues 683-704 (KLSDWSSFWSWFDFSKWLNILK) is MPER; binding to GalCer. Residues 702–722 (ILKIGFLAVIGVIGLRLLYTL) form a helical membrane-spanning segment. Residues 723–768 (YTCIARVRQGYSPLSPQIHIHPWKGQPDNAGEPEEGGRTGKSKSTH) lie on the Cytoplasmic side of the membrane. The YXXL motif; contains endocytosis signal signature appears at 733-736 (YSPL). A disordered region spans residues 744 to 768 (PWKGQPDNAGEPEEGGRTGKSKSTH).

As to quaternary structure, the mature envelope protein (Env) consists of a homotrimer of non-covalently associated gp120-gp41 heterodimers. The resulting complex protrudes from the virus surface as a spike. Interacts with host CD4 and CCR5. Gp120 also interacts with the C-type lectins CD209/DC-SIGN and CLEC4M/DC-SIGNR (collectively referred to as DC-SIGN(R)). In terms of assembly, the mature envelope protein (Env) consists of a homotrimer of non-covalently associated gp120-gp41 heterodimers. The resulting complex protrudes from the virus surface as a spike. Specific enzymatic cleavages in vivo yield mature proteins. Envelope glycoproteins are synthesized as an inactive precursor that is heavily N-glycosylated and processed likely by host cell furin in the Golgi to yield the mature SU and TM proteins. The cleavage site between SU and TM requires the minimal sequence [KR]-X-[KR]-R.

It is found in the virion membrane. It localises to the host cell membrane. Its subcellular location is the host endosome membrane. Its function is as follows. The surface protein gp120 (SU) attaches the virus to the host lymphoid cell by binding to the primary receptor CD4. This interaction induces a structural rearrangement creating a high affinity binding site for a chemokine coreceptor like CCR5. This peculiar 2 stage receptor-interaction strategy allows gp120 to maintain the highly conserved coreceptor-binding site in a cryptic conformation, protected from neutralizing antibodies. These changes are transmitted to the transmembrane protein gp41 and are thought to activate its fusogenic potential by unmasking its fusion peptide. Surface protein gp120 (SU) may target the virus to gut-associated lymphoid tissue (GALT) by binding host ITGA4/ITGB7 (alpha-4/beta-7 integrins), a complex that mediates T-cell migration to the GALT. Interaction between gp120 and ITGA4/ITGB7 would allow the virus to enter GALT early in the infection, infecting and killing most of GALT's resting CD4+ T-cells. This T-cell depletion is believed to be the major insult to the host immune system leading to AIDS. In terms of biological role, the surface protein gp120 is a ligand for CD209/DC-SIGN and CLEC4M/DC-SIGNR, which are respectively found on dendritic cells (DCs), and on endothelial cells of liver sinusoids and lymph node sinuses. These interactions allow capture of viral particles at mucosal surfaces by these cells and subsequent transmission to permissive cells. DCs are professional antigen presenting cells, critical for host immunity by inducing specific immune responses against a broad variety of pathogens. They act as sentinels in various tissues where they take up antigen, process it, and present it to T-cells following migration to lymphoid organs. SIV subverts the migration properties of dendritic cells to gain access to CD4+ T-cells in lymph nodes. Virus transmission to permissive T-cells occurs either in trans (without DCs infection, through viral capture and transmission), or in cis (following DCs productive infection, through the usual CD4-gp120 interaction), thereby inducing a robust infection. In trans infection, bound virions remain infectious over days and it is proposed that they are not degraded, but protected in non-lysosomal acidic organelles within the DCs close to the cell membrane thus contributing to the viral infectious potential during DCs' migration from the periphery to the lymphoid tissues. On arrival at lymphoid tissues, intact virions recycle back to DCs' cell surface allowing virus transmission to CD4+ T-cells. Virion capture also seems to lead to MHC-II-restricted viral antigen presentation, and probably to the activation of SIV-specific CD4+ cells. Functionally, the transmembrane protein gp41 (TM) acts as a class I viral fusion protein. Under the current model, the protein has at least 3 conformational states: pre-fusion native state, pre-hairpin intermediate state, and post-fusion hairpin state. During fusion of viral and target intracellular membranes, the coiled coil regions (heptad repeats) assume a trimer-of-hairpins structure, positioning the fusion peptide in close proximity to the C-terminal region of the ectodomain. The formation of this structure appears to drive apposition and subsequent fusion of viral and target cell membranes. Complete fusion occurs in host cell endosomes. The virus undergoes clathrin-dependent internalization long before endosomal fusion, thus minimizing the surface exposure of conserved viral epitopes during fusion and reducing the efficacy of inhibitors targeting these epitopes. Membranes fusion leads to delivery of the nucleocapsid into the cytoplasm. Its function is as follows. The envelope glycoprotein gp160 precursor down-modulates cell surface CD4 antigen by interacting with it in the endoplasmic reticulum and blocking its transport to the cell surface. The gp120-gp41 heterodimer allows rapid transcytosis of the virus through CD4 negative cells such as simple epithelial monolayers of the intestinal, rectal and endocervical epithelial barriers. Both gp120 and gp41 specifically recognize glycosphingolipids galactosyl-ceramide (GalCer) or 3' sulfo-galactosyl-ceramide (GalS) present in the lipid rafts structures of epithelial cells. Binding to these alternative receptors allows the rapid transcytosis of the virus through the epithelial cells. This transcytotic vesicle-mediated transport of virions from the apical side to the basolateral side of the epithelial cells does not involve infection of the cells themselves. This is Envelope glycoprotein gp160 (env) from Simian immunodeficiency virus agm.vervet (isolate AGM155) (SIV-agm.ver).